The primary structure comprises 219 residues: Holliday junction branch migration complex subunit RuvA (219 aa).

Positions 1-67 (MIGWLRGERI…DDGSSLFGFP (67 aa)) are domain I. A domain II region spans residues 68-146 (DRRERDLFRV…AWSAEKNSDH (79 aa)). Residues 147-161 (SDLSLVDRSDLKSLP) are flexible linker. The tract at residues 162–219 (IEPDPLQDLQLTLSTLGYEDLEIRRAMRAVATGEEVPAANDGDGWLRASLRWLNRPSA) is domain III.

It belongs to the RuvA family. In terms of assembly, homotetramer. Forms an RuvA(8)-RuvB(12)-Holliday junction (HJ) complex. HJ DNA is sandwiched between 2 RuvA tetramers; dsDNA enters through RuvA and exits via RuvB. An RuvB hexamer assembles on each DNA strand where it exits the tetramer. Each RuvB hexamer is contacted by two RuvA subunits (via domain III) on 2 adjacent RuvB subunits; this complex drives branch migration. In the full resolvosome a probable DNA-RuvA(4)-RuvB(12)-RuvC(2) complex forms which resolves the HJ.

Its subcellular location is the cytoplasm. Functionally, the RuvA-RuvB-RuvC complex processes Holliday junction (HJ) DNA during genetic recombination and DNA repair, while the RuvA-RuvB complex plays an important role in the rescue of blocked DNA replication forks via replication fork reversal (RFR). RuvA specifically binds to HJ cruciform DNA, conferring on it an open structure. The RuvB hexamer acts as an ATP-dependent pump, pulling dsDNA into and through the RuvAB complex. HJ branch migration allows RuvC to scan DNA until it finds its consensus sequence, where it cleaves and resolves the cruciform DNA. This is Holliday junction branch migration complex subunit RuvA from Synechococcus sp. (strain CC9311).